Here is a 162-residue protein sequence, read N- to C-terminus: Phospholipase A2 (162 aa).

A signal peptide spans 1 to 22 (MKVLQMFFCVILLCVTSVLVEA). The propeptide occupies 23–35 (KSTTKGDETASKR). 6 disulfide bridges follow: cysteine 60–cysteine 155, cysteine 62–cysteine 78, cysteine 77–cysteine 134, cysteine 84–cysteine 127, cysteine 94–cysteine 120, and cysteine 113–cysteine 125. Ca(2+)-binding residues include tyrosine 61, glycine 63, and glycine 65. Histidine 81 is a catalytic residue. Aspartate 82 is a Ca(2+) binding site. The active site involves aspartate 128.

This sequence belongs to the phospholipase A2 family. Group I subfamily. D49 sub-subfamily. Ca(2+) serves as cofactor. Expressed both outside and in acontia, a specialised envenomation structure laden with batteries of venom-containing nematocysts found only in the superfamily Metridioidea.

The protein localises to the secreted. The protein resides in the nematocyst. It catalyses the reaction a 1,2-diacyl-sn-glycero-3-phosphocholine + H2O = a 1-acyl-sn-glycero-3-phosphocholine + a fatty acid + H(+). In terms of biological role, PLA2 catalyzes the calcium-dependent hydrolysis of the 2-acyl groups in 3-sn-phosphoglycerides. This Calliactis polypus (Hermit crab anemone) protein is Phospholipase A2.